The following is a 73-amino-acid chain: U-scoloptoxin(15)-Sm3a (73 aa).

Positions 1-23 are cleaved as a signal peptide; it reads MERKVFLLLFVIVLLTLPGFMSA.

It belongs to the scoloptoxin-15 family. In terms of processing, contains 2 disulfide bonds. Expressed by the venom gland.

It is found in the secreted. The protein is U-scoloptoxin(15)-Sm3a of Scolopendra morsitans (Tanzanian blue ringleg centipede).